Reading from the N-terminus, the 146-residue chain is UPF0178 protein BCAH820_3075 (146 aa).

It belongs to the UPF0178 family.

The chain is UPF0178 protein BCAH820_3075 from Bacillus cereus (strain AH820).